The sequence spans 279 residues: Aquaporin A (279 aa).

At 1–40 (MVKVVPLRFITYDPLKDPSKMIYRRPISKPVKAFKGFFSE) the chain is on the cytoplasmic side. Residues 41–61 (FLGTLYLVYFCGGSVCAAFAV) form a helical membrane-spanning segment. Topologically, residues 62 to 69 (AGDSAARA) are extracellular. A helical transmembrane segment spans residues 70 to 90 (LLGGLIQGMALAALIWAVSGV). Topologically, residues 91–114 (SGCNLNPAVTLANLLSGRVGLIDS) are cytoplasmic. The NPA 1 motif lies at 96–98 (NPA). A helical membrane pass occupies residues 115 to 135 (LYYVAAQILGCIAGAGILYGC). At 136–158 (LPNMYRIDLGVPHLAPGMNTGQA) the chain is on the extracellular side. Residues 159–179 (FLMEMMLTSILCLCVLGTSVF) form a helical membrane-spanning segment. Residues 180–188 (NVWDRRLNR) are Cytoplasmic-facing. The chain crosses the membrane as a helical span at residues 189 to 209 (IAPFAIGLALFIGVAIGFNFS). Over 210–227 (GGALNPVRVLGPSIISGV) the chain is Extracellular. Positions 214–216 (NPV) match the NPA 2 motif. The helical transmembrane segment at 228–248 (WSHHWVYWLGPIVGAILAAFI) threads the bilayer. Over 249 to 279 (YRCLLQERFDVIERPGYIAPLIDPSTAVSSY) the chain is Cytoplasmic.

Belongs to the MIP/aquaporin (TC 1.A.8) family.

The protein localises to the cell membrane. Functionally, may form a water-specific channel. Required for prolonged spore survival on fruiting bodies. This Dictyostelium discoideum (Social amoeba) protein is Aquaporin A (aqpA).